The following is a 207-amino-acid chain: Large ribosomal subunit protein uL4 (207 aa).

A disordered region spans residues 56–76 (EVRGGGRKPWRQKGTGRARAG). Over residues 60 to 71 (GGRKPWRQKGTG) the composition is skewed to basic residues.

It belongs to the universal ribosomal protein uL4 family. As to quaternary structure, part of the 50S ribosomal subunit.

Functionally, one of the primary rRNA binding proteins, this protein initially binds near the 5'-end of the 23S rRNA. It is important during the early stages of 50S assembly. It makes multiple contacts with different domains of the 23S rRNA in the assembled 50S subunit and ribosome. Forms part of the polypeptide exit tunnel. This Desulfitobacterium hafniense (strain Y51) protein is Large ribosomal subunit protein uL4.